A 403-amino-acid chain; its full sequence is CCA-adding enzyme (403 aa).

Residues glycine 32 and arginine 35 each coordinate ATP. Residues glycine 32 and arginine 35 each contribute to the CTP site. Aspartate 45 and aspartate 47 together coordinate Mg(2+). Residues arginine 116, aspartate 159, arginine 162, arginine 165, and arginine 168 each contribute to the ATP site. The CTP site is built by arginine 116, aspartate 159, arginine 162, arginine 165, and arginine 168.

The protein belongs to the tRNA nucleotidyltransferase/poly(A) polymerase family. Bacterial CCA-adding enzyme type 3 subfamily. As to quaternary structure, homodimer. It depends on Mg(2+) as a cofactor.

The enzyme catalyses a tRNA precursor + 2 CTP + ATP = a tRNA with a 3' CCA end + 3 diphosphate. It catalyses the reaction a tRNA with a 3' CCA end + 2 CTP + ATP = a tRNA with a 3' CCACCA end + 3 diphosphate. Catalyzes the addition and repair of the essential 3'-terminal CCA sequence in tRNAs without using a nucleic acid template. Adds these three nucleotides in the order of C, C, and A to the tRNA nucleotide-73, using CTP and ATP as substrates and producing inorganic pyrophosphate. tRNA 3'-terminal CCA addition is required both for tRNA processing and repair. Also involved in tRNA surveillance by mediating tandem CCA addition to generate a CCACCA at the 3' terminus of unstable tRNAs. While stable tRNAs receive only 3'-terminal CCA, unstable tRNAs are marked with CCACCA and rapidly degraded. The chain is CCA-adding enzyme from Streptococcus uberis (strain ATCC BAA-854 / 0140J).